A 190-amino-acid chain; its full sequence is Anthranilate synthase component II (190 aa).

The region spanning 1–190 is the Glutamine amidotransferase type-1 domain; that stretch reads MILIIDNYDS…ENFCTGIAKA (190 aa). Residue 51-53 coordinates L-glutamine; the sequence is GPG. Residue C76 is the Nucleophile; for GATase activity of the active site. L-glutamine contacts are provided by residues Q80 and 126–127; that span reads SL. Residues H167 and E169 contribute to the active site.

In terms of assembly, tetramer of two components I and two components II.

The enzyme catalyses chorismate + L-glutamine = anthranilate + pyruvate + L-glutamate + H(+). It functions in the pathway amino-acid biosynthesis; L-tryptophan biosynthesis; L-tryptophan from chorismate: step 1/5. This chain is Anthranilate synthase component II (trpG2), found in Haloarcula marismortui (strain ATCC 43049 / DSM 3752 / JCM 8966 / VKM B-1809) (Halobacterium marismortui).